We begin with the raw amino-acid sequence, 226 residues long: Peroxynitrite isomerase (226 aa).

A GXWXGXG motif is present at residues 21 to 27 (GSWEGQG). A heme b-binding site is contributed by histidine 191. Positions 201–226 (SAAEGRLAPGAERPRGAGGRKQGEQS) are disordered.

This sequence belongs to the nitrobindin family. In terms of assembly, homodimer. Heme b is required as a cofactor.

It carries out the reaction peroxynitrite = nitrate. Its pathway is nitrogen metabolism. Its function is as follows. Heme-binding protein able to scavenge peroxynitrite and to protect free L-tyrosine against peroxynitrite-mediated nitration, by acting as a peroxynitrite isomerase that converts peroxynitrite to nitrate. Therefore, this protein likely plays a role in peroxynitrite sensing and in the detoxification of reactive nitrogen and oxygen species (RNS and ROS, respectively). Is able to bind nitric oxide (NO) in vitro, but may act as a sensor of peroxynitrite levels in vivo. This Micrococcus luteus (strain ATCC 4698 / DSM 20030 / JCM 1464 / CCM 169 / CCUG 5858 / IAM 1056 / NBRC 3333 / NCIMB 9278 / NCTC 2665 / VKM Ac-2230) (Micrococcus lysodeikticus) protein is Peroxynitrite isomerase.